The primary structure comprises 750 residues: 5-methyltetrahydropteroyltriglutamate--homocysteine methyltransferase (750 aa).

5-methyltetrahydropteroyltri-L-glutamate is bound by residues 15–18 (RELK) and lysine 114. L-homocysteine is bound by residues 425-427 (IGS) and glutamate 478. L-methionine contacts are provided by residues 425–427 (IGS) and glutamate 478. Residue tryptophan 555 coordinates 5-methyltetrahydropteroyltri-L-glutamate. Aspartate 593 provides a ligand contact to L-homocysteine. An L-methionine-binding site is contributed by aspartate 593. A 5-methyltetrahydropteroyltri-L-glutamate-binding site is contributed by glutamate 599. The Zn(2+) site is built by histidine 636, cysteine 638, and glutamate 660. The active-site Proton donor is histidine 689. Zn(2+) is bound at residue cysteine 721.

Belongs to the vitamin-B12 independent methionine synthase family. The cofactor is Zn(2+).

It catalyses the reaction 5-methyltetrahydropteroyltri-L-glutamate + L-homocysteine = tetrahydropteroyltri-L-glutamate + L-methionine. Its pathway is amino-acid biosynthesis; L-methionine biosynthesis via de novo pathway; L-methionine from L-homocysteine (MetE route): step 1/1. In terms of biological role, catalyzes the transfer of a methyl group from 5-methyltetrahydrofolate to homocysteine resulting in methionine formation. This is 5-methyltetrahydropteroyltriglutamate--homocysteine methyltransferase from Streptococcus sanguinis (strain SK36).